Reading from the N-terminus, the 188-residue chain is PRA1 family protein 3 (188 aa).

Position 1 is an N-acetylmethionine (methionine 1). Topologically, residues 1–35 (MDVNIAPLRAWDDFFPGSDRFAQPDFRDISKWNNR) are cytoplasmic. A run of 2 helical transmembrane segments spans residues 36–56 (VVSN…MMIS) and 57–77 (VVGF…VLVF). Topologically, residues 78 to 93 (TGFVWAAHNKDALRRL) are cytoplasmic. 2 helical membrane-spanning segments follow: residues 94–114 (KKRY…FLIS) and 115–135 (MFGG…LMFI). Positions 103 to 117 (MVVMLASYFLISMFG) are required for homodimer formation and heterodimer formation with ARL6IP1. The Cytoplasmic segment spans residues 136-188 (HASLRLRNLKNKLENKMEGIGLKRTPMGIVLDALEQQEEGINRLTDYISKVKE). Residues 136–188 (HASLRLRNLKNKLENKMEGIGLKRTPMGIVLDALEQQEEGINRLTDYISKVKE) form a targeting to endoplasmic reticulum membrane region.

Belongs to the PRA1 family. As to quaternary structure, homodimer. Heterodimer with ARL6IP1. Forms multimers. Interacts with ARL6. Interacts with prenylated RAB1A and RAB3A. Interacts with SLC1A1/EAAC1. Interacts with RTN2 (via first transmembrane domain). Does not interact with VAMP1, VAMP2 or VAMP3.

It localises to the endoplasmic reticulum membrane. The protein resides in the cell membrane. The protein localises to the cytoplasm. It is found in the cytoskeleton. Regulates intracellular concentrations of taurine and glutamate. Negatively modulates SLC1A1/EAAC1 glutamate transport activity by decreasing its affinity for glutamate in a PKC activity-dependent manner. Plays a role in the retention of SLC1A1/EAAC1 in the endoplasmic reticulum. The polypeptide is PRA1 family protein 3 (ARL6IP5) (Macaca fascicularis (Crab-eating macaque)).